The chain runs to 464 residues: Fumarate hydratase class II (464 aa).

Residues serine 96–threonine 98, histidine 127–aspartate 130, serine 137–asparagine 139, and threonine 185 each bind substrate. Histidine 186 serves as the catalytic Proton donor/acceptor. Residue serine 316 is part of the active site. Substrate contacts are provided by residues serine 317 and lysine 322–asparagine 324.

It belongs to the class-II fumarase/aspartase family. Fumarase subfamily. Homotetramer.

It localises to the cytoplasm. It catalyses the reaction (S)-malate = fumarate + H2O. It participates in carbohydrate metabolism; tricarboxylic acid cycle; (S)-malate from fumarate: step 1/1. Involved in the TCA cycle. Catalyzes the stereospecific interconversion of fumarate to L-malate. The chain is Fumarate hydratase class II from Pseudomonas syringae pv. tomato (strain ATCC BAA-871 / DC3000).